Reading from the N-terminus, the 882-residue chain is Homeobox-leucine zipper protein ROC3 (882 aa).

A disordered region spans residues 104-144; the sequence is DVDDDHKPQHSGHDQPPDAAQPSGAAGGNAKKKRYHRHTAH. Basic and acidic residues predominate over residues 107–119; that stretch reads DDHKPQHSGHDQP. A compositionally biased stretch (basic residues) spans 133 to 143; it reads AKKKRYHRHTA. Positions 134–193 form a DNA-binding region, homeobox; the sequence is KKKRYHRHTAHQIQQMEALFKECPHPDDKQRLKLSQELGLKPRQVKFWFQNRRTQMKAQQ. Residues 200–263 adopt a coiled-coil conformation; sequence ILRAENENLK…LDRLACIATR (64 aa). The region spanning 340–584 is the START domain; the sequence is QEQDKQLVVD…LQRQCERLAS (245 aa). Residues 782 to 816 are compositionally biased toward low complexity; it reads AAAPTISSSTTTTTGNGNGETSSTPPRNSSSNNNN. The disordered stretch occupies residues 782-820; the sequence is AAAPTISSSTTTTTGNGNGETSSTPPRNSSSNNNNADEL.

The protein belongs to the HD-ZIP homeobox family. Class IV subfamily.

Its subcellular location is the nucleus. Probable transcription factor. The chain is Homeobox-leucine zipper protein ROC3 (ROC3) from Oryza sativa subsp. japonica (Rice).